Here is an 851-residue protein sequence, read N- to C-terminus: Glycogen phosphorylase, liver form (851 aa).

The residue at position 2 (Ala2) is an N-acetylalanine. A Phosphoserine; by PHK; in form phosphorylase a modification is found at Ser15. AMP is bound by residues 43 to 45 (DRN), Tyr76, and Arg310. Lys364 carries the post-translational modification N6-succinyllysine. Lys470 carries the N6-acetyllysine modification. 3 positions are modified to phosphoserine: Ser524, Ser561, and Ser639. An N6-(pyridoxal phosphate)lysine modification is found at Lys681. Lys796 is modified (N6-acetyllysine).

The protein belongs to the glycogen phosphorylase family. In terms of assembly, homodimer; enzymatically active. Interacts with PPP1R3B; recruits the phosphatase PP1 which dephosphorylates and inactivates PYGL/glycogen phosphorylase. Requires pyridoxal 5'-phosphate as cofactor. In terms of processing, acetylation, which is up-regulated by glucose and insulin and down-regulated by glucagon, inhibits the glycogen phosphorylase activity by promoting PPP1R3B-mediated recruitment of phosphatase PP1 and Ser-15 dephosphorylation. Phosphorylation at Ser-15 converts inactive phosphorylase b into active phosphorylase a. Dephosphorylation of Ser-15 by phosphatase PP1 inactivates the enzyme.

The protein localises to the cytoplasm. Its subcellular location is the cytosol. It carries out the reaction [(1-&gt;4)-alpha-D-glucosyl](n) + phosphate = [(1-&gt;4)-alpha-D-glucosyl](n-1) + alpha-D-glucose 1-phosphate. With respect to regulation, allosterically regulated through the non-covalent binding of metabolites, being activated by AMP and inhibited by ATP, ADP, and glucose-6-phosphate. The activity is also controlled by post-translational modifications including phosphorylation and acetylation. Functionally, allosteric enzyme that catalyzes the rate-limiting step in glycogen catabolism, the phosphorolytic cleavage of glycogen to produce glucose-1-phosphate, and plays a central role in maintaining cellular and organismal glucose homeostasis. The polypeptide is Glycogen phosphorylase, liver form (Bos taurus (Bovine)).